Reading from the N-terminus, the 381-residue chain is Probable tRNA sulfurtransferase (381 aa).

The THUMP domain maps to 68–176; that stretch reads DLALKLLKKV…NDGAYIFTEK (109 aa). Residues 194 to 195, Lys-276, Gly-298, and Gln-307 contribute to the ATP site; that span reads LI.

This sequence belongs to the ThiI family.

Its subcellular location is the cytoplasm. The catalysed reaction is [ThiI sulfur-carrier protein]-S-sulfanyl-L-cysteine + a uridine in tRNA + 2 reduced [2Fe-2S]-[ferredoxin] + ATP + H(+) = [ThiI sulfur-carrier protein]-L-cysteine + a 4-thiouridine in tRNA + 2 oxidized [2Fe-2S]-[ferredoxin] + AMP + diphosphate. It catalyses the reaction [ThiS sulfur-carrier protein]-C-terminal Gly-Gly-AMP + S-sulfanyl-L-cysteinyl-[cysteine desulfurase] + AH2 = [ThiS sulfur-carrier protein]-C-terminal-Gly-aminoethanethioate + L-cysteinyl-[cysteine desulfurase] + A + AMP + 2 H(+). It functions in the pathway cofactor biosynthesis; thiamine diphosphate biosynthesis. Catalyzes the ATP-dependent transfer of a sulfur to tRNA to produce 4-thiouridine in position 8 of tRNAs, which functions as a near-UV photosensor. Also catalyzes the transfer of sulfur to the sulfur carrier protein ThiS, forming ThiS-thiocarboxylate. This is a step in the synthesis of thiazole, in the thiamine biosynthesis pathway. The sulfur is donated as persulfide by IscS. This Methanocaldococcus jannaschii (strain ATCC 43067 / DSM 2661 / JAL-1 / JCM 10045 / NBRC 100440) (Methanococcus jannaschii) protein is Probable tRNA sulfurtransferase.